The chain runs to 104 residues: Protein enhancer of rudimentary (104 aa).

Threonine 18 carries the phosphothreonine; by CK2 modification. The residue at position 24 (serine 24) is a Phosphoserine; by CK2.

This sequence belongs to the E(R) family.

In terms of biological role, acts as an enhancer of the rudimentary gene. Has a role in pyrimidine biosynthesis and the cell cycle. This chain is Protein enhancer of rudimentary (e(r)), found in Drosophila virilis (Fruit fly).